Consider the following 251-residue polypeptide: UPF0309 protein GK1441 (251 aa).

In terms of domain architecture, SIS spans 31–214; that stretch reads VSEAIQNGGI…VLMAENGIEP (184 aa).

Belongs to the UPF0309 family.

The polypeptide is UPF0309 protein GK1441 (Geobacillus kaustophilus (strain HTA426)).